The chain runs to 505 residues: Probable cytosol aminopeptidase (505 aa).

2 residues coordinate Mn(2+): K269 and D274. K281 is an active-site residue. 3 residues coordinate Mn(2+): D292, D351, and E353. The active site involves R355.

It belongs to the peptidase M17 family. Mn(2+) serves as cofactor.

The protein resides in the cytoplasm. It catalyses the reaction Release of an N-terminal amino acid, Xaa-|-Yaa-, in which Xaa is preferably Leu, but may be other amino acids including Pro although not Arg or Lys, and Yaa may be Pro. Amino acid amides and methyl esters are also readily hydrolyzed, but rates on arylamides are exceedingly low.. The catalysed reaction is Release of an N-terminal amino acid, preferentially leucine, but not glutamic or aspartic acids.. Its function is as follows. Presumably involved in the processing and regular turnover of intracellular proteins. Catalyzes the removal of unsubstituted N-terminal amino acids from various peptides. The protein is Probable cytosol aminopeptidase of Rhodococcus jostii (strain RHA1).